A 116-amino-acid chain; its full sequence is Vesicle-associated membrane protein 2 (116 aa).

The interval 1-33 (MSATAATAPPAAPAGEGGPPAPPPNLTSNRRLQ) is disordered. Ser2 carries the post-translational modification N-acetylserine. The Cytoplasmic segment spans residues 2 to 94 (SATAATAPPA…KRKYWWKNLK (93 aa)). Residues 31-91 (RLQQTQAQVD…AKLKRKYWWK (61 aa)) enclose the v-SNARE coiled-coil homology domain. Residues 92 to 116 (NLKMMIILGVICAIILIIIIVYFST) form a required for interaction with SEPT8 region. A helical; Anchor for type IV membrane protein transmembrane segment spans residues 95 to 114 (MMIILGVICAIILIIIIVYF). Topologically, residues 115–116 (ST) are vesicular.

This sequence belongs to the synaptobrevin family. Part of the SNARE core complex containing SNAP25, VAMP2 and STX1A; this complex constitutes the basic catalytic machinery of the complex neurotransmitter release apparatus. Recruited to the SNARE complex following binding of the SNARE complex component STX1A to STXBP1. This complex binds to CPLX1. Interacts with POPDC1 and STX4. Interacts with VAPA and VAPB. Interacts with WDFY2, PRKCZ and PRKCI. Forms a complex with WDFY2 and PRKCZ. Interacts (via N-terminus) with KCNB1 (via N-terminus and C-terminus); stimulates the channel inactivation rate of KCNB1. Interacts with SEPT8; the interaction inhibits interaction of VAMP2 with SYP. Interacts with SYP; the interaction is inhibited by interaction with SEPT8. Interacts with PICALM. Interacts with alpha-synuclein/SNCA. Interacts with STX3. In terms of processing, phosphorylated by PRKCZ in vitro and this phosphorylation is increased in the presence of WDFY2. (Microbial infection) Targeted and hydrolyzed by C.botulinum neurotoxin type B (BoNT/B, botB) which hydrolyzes the 76-Gln-|-Phe-77 bond and probably inhibits neurotransmitter release. Post-translationally, (Microbial infection) Targeted and hydrolyzed by C.botulinum neurotoxin type D (BoNT/D, botD) which probably hydrolyzes the 59-Lys-|-Leu-60 bond and inhibits neurotransmitter release. Note that humans are not known to be infected by C.botulinum type D. In terms of processing, (Microbial infection) Targeted and hydrolyzed by C.botulinum neurotoxin type F (BoNT/F, botF) which hydrolyzes the 58-Gln-|-Lys-59 bond and probably inhibits neurotransmitter release. (Microbial infection) Targeted and hydrolyzed by C.tetani tetanus toxin (tetX) which hydrolyzes the 76-Gln-|-Phe-77 bond and probably inhibits neurotransmitter release. As to expression, nervous system and skeletal muscle.

It localises to the cytoplasmic vesicle. The protein resides in the secretory vesicle. The protein localises to the synaptic vesicle membrane. It is found in the cell membrane. In terms of biological role, involved in the targeting and/or fusion of transport vesicles to their target membrane. Major SNARE protein of synaptic vesicles which mediates fusion of synaptic vesicles to release neurotransmitters. Essential for fast vesicular exocytosis and activity-dependent neurotransmitter release as well as fast endocytosis that mediates rapid reuse of synaptic vesicles. Modulates the gating characteristics of the delayed rectifier voltage-dependent potassium channel KCNB1. This is Vesicle-associated membrane protein 2 from Homo sapiens (Human).